Here is a 434-residue protein sequence, read N- to C-terminus: Eukaryotic translation initiation factor 3 subunit E (434 aa).

The region spanning 219-392 is the PCI domain; the sequence is FFNHPKGRDL…GHVVMGTQPL (174 aa).

The protein belongs to the eIF-3 subunit E family. Component of the eukaryotic translation initiation factor 3 (eIF-3) complex. The eIF-3 complex interacts with pix. Interacts with mxt.

The protein resides in the cytoplasm. Its function is as follows. Component of the eukaryotic translation initiation factor 3 (eIF-3) complex, which is involved in protein synthesis of a specialized repertoire of mRNAs and, together with other initiation factors, stimulates binding of mRNA and methionyl-tRNAi to the 40S ribosome. The eIF-3 complex specifically targets and initiates translation of a subset of mRNAs involved in cell proliferation. The sequence is that of Eukaryotic translation initiation factor 3 subunit E (eIF3-S6) from Drosophila virilis (Fruit fly).